Reading from the N-terminus, the 181-residue chain is Large ribosomal subunit protein uL6 (181 aa).

It belongs to the universal ribosomal protein uL6 family. Part of the 50S ribosomal subunit.

Its function is as follows. This protein binds to the 23S rRNA, and is important in its secondary structure. It is located near the subunit interface in the base of the L7/L12 stalk, and near the tRNA binding site of the peptidyltransferase center. In Phytoplasma mali (strain AT), this protein is Large ribosomal subunit protein uL6.